A 566-amino-acid polypeptide reads, in one-letter code: Putative ankyrin repeat protein RF_0987 (566 aa).

Disordered regions lie at residues 61–118 (KKKN…HENS), 276–314 (PPVM…SAEI), and 355–392 (VNNN…SEST). Residues 78–92 (NQEEPKLASQEHTEA) are compositionally biased toward basic and acidic residues. Residues 101–112 (TGNTALPSVTAS) show a composition bias toward polar residues. The span at 296-308 (TPVTTPSKVVPTT) shows a compositional bias: low complexity. The span at 365–378 (EKSPPVSSSNVTIQ) shows a compositional bias: polar residues. 2 ANK repeats span residues 506–535 (SGET…KIST) and 539–566 (ECQY…KGYQ).

The protein is Putative ankyrin repeat protein RF_0987 of Rickettsia felis (strain ATCC VR-1525 / URRWXCal2) (Rickettsia azadi).